The chain runs to 471 residues: Tumor necrosis factor receptor superfamily member 1A (471 aa).

Positions 1-29 (MGLPTVPGLLLPLVLPALLADVYPAGVQG) are cleaved as a signal peptide. At 30–210 (LVPHPGDLEK…GKDSQDPGTT (181 aa)) the chain is on the extracellular side. TNFR-Cys repeat units follow at residues 43 to 82 (PCPQGKYNHPQNSTICCTKCHKGTYLYNDCPGPGRDTDCR), 83 to 125 (VCAP…DTVC), 126 to 166 (GCRK…DTIC), and 167 to 195 (HCHMGFFLKGAKCISCHDCKNKECEKLCP). Cystine bridges form between cysteine 44-cysteine 58, cysteine 59-cysteine 72, cysteine 62-cysteine 81, cysteine 84-cysteine 99, cysteine 102-cysteine 117, cysteine 105-cysteine 125, and cysteine 127-cysteine 143. The N-linked (GlcNAc...) asparagine glycan is linked to asparagine 54. N-linked (GlcNAc...) asparagine glycosylation is found at asparagine 145 and asparagine 151. 5 disulfides stabilise this stretch: cysteine 146–cysteine 158, cysteine 149–cysteine 166, cysteine 168–cysteine 179, cysteine 182–cysteine 194, and cysteine 185–cysteine 190. Residues 211-233 (VLLPLVIVFGLCLASFASVVLAC) form a helical membrane-spanning segment. At 234–471 (RYQRWKPKLY…RLASEPRLLW (238 aa)) the chain is on the cytoplasmic side. Positions 340–360 (TPGPPASTHLCTPVQKWEASA) are N-SMase activation domain (NSD). Residues 372-457 (PATLYAVVDG…GCLENIEEAL (86 aa)) form the Death domain.

As to quaternary structure, binding of TNF to the extracellular domain leads to homotrimerization. The aggregated death domains provide a novel molecular interface that interacts specifically with the death domain of TRADD. Various TRADD-interacting proteins such as TRAFS, RIPK1 and possibly FADD, are recruited to the complex by their association with TRADD. This complex activates at least two distinct signaling cascades, apoptosis and NF-kappa-B signaling. Interacts with BAG4, BABAM2, FEM1B, GRB2, SQSTM1 and TRPC4AP. Interacts directly with NOL3 (via CARD domain); inhibits TNF-signaling pathway. Interacts with SH3RF2, TRADD and RIPK1. SH3RF2 facilitates the recruitment of RIPK1 and TRADD to TNFRSF1A in a TNF-alpha-dependent process. Interacts with PGLYRP1; this interaction is important for cell death induction. Interacts (via death domain) with MADD (via death domain).

Its subcellular location is the cell membrane. It localises to the golgi apparatus membrane. Its function is as follows. Receptor for TNFSF2/TNF-alpha and homotrimeric TNFSF1/lymphotoxin-alpha. The adapter molecule FADD recruits caspase-8 to the activated receptor. The resulting death-inducing signaling complex (DISC) performs caspase-8 proteolytic activation which initiates the subsequent cascade of caspases (aspartate-specific cysteine proteases) mediating apoptosis. The protein is Tumor necrosis factor receptor superfamily member 1A (TNFRSF1A) of Bos taurus (Bovine).